The chain runs to 426 residues: Serine hydroxymethyltransferase (426 aa).

Residues L113 and G117–L119 contribute to the (6S)-5,6,7,8-tetrahydrofolate site. The residue at position 222 (K222) is an N6-(pyridoxal phosphate)lysine. S363 to F365 lines the (6S)-5,6,7,8-tetrahydrofolate pocket.

Belongs to the SHMT family. As to quaternary structure, homodimer. Pyridoxal 5'-phosphate serves as cofactor.

It is found in the cytoplasm. The catalysed reaction is (6R)-5,10-methylene-5,6,7,8-tetrahydrofolate + glycine + H2O = (6S)-5,6,7,8-tetrahydrofolate + L-serine. Its pathway is one-carbon metabolism; tetrahydrofolate interconversion. It participates in amino-acid biosynthesis; glycine biosynthesis; glycine from L-serine: step 1/1. In terms of biological role, catalyzes the reversible interconversion of serine and glycine with tetrahydrofolate (THF) serving as the one-carbon carrier. This reaction serves as the major source of one-carbon groups required for the biosynthesis of purines, thymidylate, methionine, and other important biomolecules. Also exhibits THF-independent aldolase activity toward beta-hydroxyamino acids, producing glycine and aldehydes, via a retro-aldol mechanism. The polypeptide is Serine hydroxymethyltransferase (Porphyromonas gingivalis (strain ATCC 33277 / DSM 20709 / CIP 103683 / JCM 12257 / NCTC 11834 / 2561)).